The following is a 1346-amino-acid chain: Zinc finger protein 541 (1346 aa).

Disordered stretches follow at residues 1–34 and 113–136; these read MDQY…DTLN and EADE…SSPQ. Positions 21 to 32 are enriched in polar residues; it reads FSESQGLNCSDT. 3 consecutive C2H2-type zinc fingers follow at residues 140–162, 168–190, and 196–220; these read LDCS…YLTH, HVCK…MLTH, and FVCI…YEVH. 4 disordered regions span residues 235–271, 283–328, 437–472, and 578–744; these read ACGD…LLPH, VHQK…AAPA, SAVP…EDAL, and SQLP…GGYR. Composition is skewed to low complexity over residues 294-323 and 440-458; these read PAGA…PAGP and PSRE…SPSE. The segment covering 671 to 685 has biased composition (polar residues); the sequence is PDISSLAKQLRSSKG. The C2H2-type 4 zinc-finger motif lies at 838–860; it reads FVCKNCSQMFYTEKGLSSHMCFH. The tract at residues 931–971 is disordered; it reads AMGQEKDGEERDSKESSQQRKRKKRPPPSTAGEPGPAGCHQ. Positions 934–948 are enriched in basic and acidic residues; it reads QEKDGEERDSKESSQ. One can recognise an ELM2 domain in the interval 1053 to 1145; that stretch reads PHINIGSRFQ…VALETLLLRG (93 aa). Residues 1160–1211 enclose the SANT domain; it reads TGSDVWTPIEKRLFKKAFYAHKKDFYLIHKMIQTKTVAQCVEYYYIWKKMIK. A disordered region spans residues 1224–1281; sequence VKREPEEVERTEEKVPCSPRERPSHHPTPKLKTKSYRRESILSSSPNAGSKRTPELLG. Over residues 1234 to 1247 the composition is skewed to basic and acidic residues; the sequence is TEEKVPCSPRERPS. Residues 1248-1258 show a composition bias toward basic residues; that stretch reads HHPTPKLKTKS. Polar residues predominate over residues 1264-1273; that stretch reads ILSSSPNAGS. The segment at 1289–1311 adopts a C2H2-type 5 zinc-finger fold; the sequence is FPCRECERVFDKIKSRNAHMKRH.

As to quaternary structure, interacts with DNTTIP1. Identified in a complex with KCDT19, HDAC1 and HSPA2. Component of a histone deacetylase complex containing DNTTIP1, ZNF541, HDAC1 and HDAC2. Identified in a complex with HDAC1, HDAC2, DNTTIP1 and KCTD19.

It is found in the nucleus. In terms of biological role, transcription regulator which is essential for male fertility and for the completion of meiotic prophase in spermatocytes. Regulates progression of the pachytene stage of meiotic prophase by activating the expression of genes involved in meiosis during spermatogenesis. Maintains the repression of pre-pachytene transcriptional programs, including meiotic double-strand breaks (DSB) formation genes in pachytene spermatocytes and suppresses aberrant DSB formation after mid-pachytene, thus ensuring meiosis progression. This Homo sapiens (Human) protein is Zinc finger protein 541 (ZNF541).